The sequence spans 480 residues: Glycogen synthase (480 aa).

K15 serves as a coordination point for ADP-alpha-D-glucose.

The protein belongs to the glycosyltransferase 1 family. Bacterial/plant glycogen synthase subfamily.

The catalysed reaction is [(1-&gt;4)-alpha-D-glucosyl](n) + ADP-alpha-D-glucose = [(1-&gt;4)-alpha-D-glucosyl](n+1) + ADP + H(+). Its pathway is glycan biosynthesis; glycogen biosynthesis. Synthesizes alpha-1,4-glucan chains using ADP-glucose. The protein is Glycogen synthase of Opitutus terrae (strain DSM 11246 / JCM 15787 / PB90-1).